A 362-amino-acid chain; its full sequence is Peptide chain release factor 1 (362 aa).

N5-methylglutamine is present on Gln-237.

It belongs to the prokaryotic/mitochondrial release factor family. Post-translationally, methylated by PrmC. Methylation increases the termination efficiency of RF1.

The protein resides in the cytoplasm. Functionally, peptide chain release factor 1 directs the termination of translation in response to the peptide chain termination codons UAG and UAA. This Vibrio vulnificus (strain CMCP6) protein is Peptide chain release factor 1.